A 445-amino-acid polypeptide reads, in one-letter code: Na(+)-translocating NADH-quinone reductase subunit A (445 aa).

This sequence belongs to the NqrA family. In terms of assembly, composed of six subunits; NqrA, NqrB, NqrC, NqrD, NqrE and NqrF.

It carries out the reaction a ubiquinone + n Na(+)(in) + NADH + H(+) = a ubiquinol + n Na(+)(out) + NAD(+). In terms of biological role, NQR complex catalyzes the reduction of ubiquinone-1 to ubiquinol by two successive reactions, coupled with the transport of Na(+) ions from the cytoplasm to the periplasm. NqrA to NqrE are probably involved in the second step, the conversion of ubisemiquinone to ubiquinol. This is Na(+)-translocating NADH-quinone reductase subunit A from Pseudomonas aeruginosa (strain UCBPP-PA14).